A 615-amino-acid polypeptide reads, in one-letter code: Alpha-fetoprotein (615 aa).

The N-terminal stretch at 1-15 (MAVLPLSGAIRLSRG) is a signal peptide. The short motif at 14–16 (RGD) is the Cell attachment site element. Albumin domains are found at residues 27–218 (WAKK…RRQA), 223–415 (KPIR…ELKK), and 416–609 (HIYE…VLVT). Cystine bridges form between Cys-109–Cys-121 and Cys-120–Cys-131. Asn-137 and Asn-157 each carry an N-linked (GlcNAc...) asparagine glycan. 9 disulfides stabilise this stretch: Cys-155-Cys-200, Cys-199-Cys-213, Cys-236-Cys-282, Cys-281-Cys-289, Cys-301-Cys-315, Cys-314-Cys-325, Cys-396-Cys-405, Cys-428-Cys-458, and Cys-457-Cys-468. The Cell attachment site motif lies at 283–285 (RGD). The N-linked (GlcNAc...) asparagine glycan is linked to Asn-472. 4 disulfide bridges follow: Cys-485–Cys-501, Cys-500–Cys-511, Cys-538–Cys-593, and Cys-592–Cys-601.

It belongs to the ALB/AFP/VDB family. Dimeric and trimeric forms have been found in addition to the monomeric form. Post-translationally, sulfated.

Its subcellular location is the secreted. Its function is as follows. Binds copper, nickel, and fatty acids as well as, and bilirubin less well than, serum albumin. This chain is Alpha-fetoprotein (AFP), found in Gallus gallus (Chicken).